The following is a 274-amino-acid chain: NH(3)-dependent NAD(+) synthetase (274 aa).

ATP is bound at residue 46–53; it reads GISGGQDS. D52 serves as a coordination point for Mg(2+). Residue R140 coordinates deamido-NAD(+). T160 contributes to the ATP binding site. E165 is a Mg(2+) binding site. 2 residues coordinate deamido-NAD(+): K173 and D180. ATP-binding residues include K189 and T211. A deamido-NAD(+)-binding site is contributed by 260 to 261; the sequence is HK.

The protein belongs to the NAD synthetase family. Homodimer.

The catalysed reaction is deamido-NAD(+) + NH4(+) + ATP = AMP + diphosphate + NAD(+) + H(+). The protein operates within cofactor biosynthesis; NAD(+) biosynthesis; NAD(+) from deamido-NAD(+) (ammonia route): step 1/1. Functionally, catalyzes the ATP-dependent amidation of deamido-NAD to form NAD. Uses ammonia as a nitrogen source. The chain is NH(3)-dependent NAD(+) synthetase from Sodalis glossinidius (strain morsitans).